Here is a 174-residue protein sequence, read N- to C-terminus: Superoxide dismutase [Cu-Zn] (174 aa).

The signal sequence occupies residues 1–20 (MMKSLFIASTMVLMAFPAFA). Positions 68, 70, and 93 each coordinate Cu cation. The cysteines at positions 75 and 170 are disulfide-linked. 4 residues coordinate Zn(2+): His-93, His-102, His-110, and Asp-113. His-148 contributes to the Cu cation binding site.

The protein belongs to the Cu-Zn superoxide dismutase family. As to quaternary structure, homodimer. Cu cation serves as cofactor. Requires Zn(2+) as cofactor.

The protein resides in the periplasm. It carries out the reaction 2 superoxide + 2 H(+) = H2O2 + O2. In terms of biological role, destroys radicals which are normally produced within the cells and which are toxic to biological systems. The polypeptide is Superoxide dismutase [Cu-Zn] (sodC) (Brucella melitensis biotype 1 (strain ATCC 23456 / CCUG 17765 / NCTC 10094 / 16M)).